A 429-amino-acid chain; its full sequence is Enolase (429 aa).

A (2R)-2-phosphoglycerate-binding site is contributed by Gln162. Glu204 (proton donor) is an active-site residue. 3 residues coordinate Mg(2+): Asp241, Glu282, and Asp309. Positions 334, 363, 364, and 385 each coordinate (2R)-2-phosphoglycerate. Lys334 functions as the Proton acceptor in the catalytic mechanism.

Belongs to the enolase family. Mg(2+) is required as a cofactor.

Its subcellular location is the cytoplasm. The protein localises to the secreted. It localises to the cell surface. The catalysed reaction is (2R)-2-phosphoglycerate = phosphoenolpyruvate + H2O. The protein operates within carbohydrate degradation; glycolysis; pyruvate from D-glyceraldehyde 3-phosphate: step 4/5. Functionally, catalyzes the reversible conversion of 2-phosphoglycerate (2-PG) into phosphoenolpyruvate (PEP). It is essential for the degradation of carbohydrates via glycolysis. This chain is Enolase, found in Acidothermus cellulolyticus (strain ATCC 43068 / DSM 8971 / 11B).